A 634-amino-acid polypeptide reads, in one-letter code: DNA gyrase subunit B (634 aa).

The Toprim domain occupies 416-530; that stretch reads REIYIVEGDS…NGHVYIAMPP (115 aa). Glu422, Asp495, and Asp497 together coordinate Mg(2+).

It belongs to the type II topoisomerase GyrB family. Heterotetramer, composed of two GyrA and two GyrB chains. In the heterotetramer, GyrA contains the active site tyrosine that forms a transient covalent intermediate with DNA, while GyrB binds cofactors and catalyzes ATP hydrolysis. Mg(2+) serves as cofactor. Requires Mn(2+) as cofactor. Ca(2+) is required as a cofactor.

The protein localises to the cytoplasm. The catalysed reaction is ATP-dependent breakage, passage and rejoining of double-stranded DNA.. Functionally, a type II topoisomerase that negatively supercoils closed circular double-stranded (ds) DNA in an ATP-dependent manner to modulate DNA topology and maintain chromosomes in an underwound state. Negative supercoiling favors strand separation, and DNA replication, transcription, recombination and repair, all of which involve strand separation. Also able to catalyze the interconversion of other topological isomers of dsDNA rings, including catenanes and knotted rings. Type II topoisomerases break and join 2 DNA strands simultaneously in an ATP-dependent manner. The polypeptide is DNA gyrase subunit B (Borrelia hermsii).